Here is a 275-residue protein sequence, read N- to C-terminus: Tumor necrosis factor-inducible gene 6 protein (275 aa).

An N-terminal signal peptide occupies residues 1–17; the sequence is MVVLLCLCVLLWEEAHG. The 94-residue stretch at 36-129 folds into the Link domain; it reads GVYHREARAG…SERWDAYCYN (94 aa). 3 cysteine pairs are disulfide-bonded: C58–C127, C82–C103, and C135–C161. N118 is a glycosylation site (N-linked (GlcNAc...) asparagine). Residues 135–247 form the CUB domain; the sequence is CGGVFTDPKR…GGFQIKYVTV (113 aa). Positions 183, 191, 232, 234, and 235 each coordinate Ca(2+). The cysteines at positions 188 and 210 are disulfide-linked. The segment covering 253–264 has biased composition (polar residues); the sequence is SSQAKNTSTTGN. The disordered stretch occupies residues 253–275; that stretch reads SSQAKNTSTTGNKKFLPGRFSHL. N258 carries N-linked (GlcNAc...) asparagine glycosylation.

Interacts (via Link domain) with inter-alpha-inhibitor (I-alpha-I) component bikunin. Interacts with ITIH2/HC2; this interaction is required for transesterification of the HC to hyaluronan. Interacts (via Link and CUB domains) with ITIH1. Chondroitin sulfate may be required for the stability of the complex. Interacts (via Link domain) with various C-X-C and C-C chemokines including PF4, CXCL8, CXCL11, CXCL12, CCL2, CCL7, CCL19, CCL21, and CCL27; this interaction interferes with chemokine binding to glycosaminoglycans. Interacts (primarily via Link domain) with BMP2; this interaction is inhibited by hyaluronan. Interacts (via both Link and CUB domains) with TNFSF11. Interacts (via CUB domain) with FN1 (via type III repeats 9-14); this interaction enhances fibronectin fibril assembly. TNFAIP6 may act as a bridging molecule between FN1 and THBS1. As to expression, expressed in epiphyseal and metaphyseal bone marrow of both the femur and tibia (at protein level).

The protein resides in the secreted. Major regulator of extracellular matrix organization during tissue remodeling. Catalyzes the transfer of a heavy chain (HC) from inter-alpha-inhibitor (I-alpha-I) complex to hyaluronan. Cleaves the ester bond between the C-terminus of the HC and GalNAc residue of the chondroitin sulfate chain in I-alpha-I complex followed by transesterification of the HC to hyaluronan. In the process, potentiates the antiprotease function of I-alpha-I complex through release of free bikunin. Acts as a catalyst in the formation of hyaluronan-HC oligomers and hyaluronan-rich matrix surrounding the cumulus cell-oocyte complex, a necessary step for oocyte fertilization. Assembles hyaluronan in pericellular matrices that serve as platforms for receptor clustering and signaling. Enables binding of hyaluronan deposited on the surface of macrophages to LYVE1 on lymphatic endothelium and facilitates macrophage extravasation. Alters hyaluronan binding to functionally latent CD44 on vascular endothelium, switching CD44 into an active state that supports leukocyte rolling. Modulates the interaction of chemokines with extracellular matrix components and proteoglycans on endothelial cell surface, likely preventing chemokine gradient formation. In a negative feedback mechanism, may limit excessive neutrophil recruitment at inflammatory sites by antagonizing the association of CXCL8 with glycosaminoglycans on vascular endothelium. Has a role in osteogenesis and bone remodeling. Inhibits BMP2-dependent differentiation of mesenchymal stem cell to osteoblasts. Protects against bone erosion during inflammation by inhibiting TNFSF11/RANKL-dependent osteoclast activation. The polypeptide is Tumor necrosis factor-inducible gene 6 protein (Tnfaip6) (Mus musculus (Mouse)).